The primary structure comprises 123 residues: Small ribosomal subunit protein uS12 (123 aa).

Aspartate 89 is subject to 3-methylthioaspartic acid. The disordered stretch occupies residues 100–123 (GSLDTSGVKGRNQGRSKYGTKRPK). Positions 111 to 123 (NQGRSKYGTKRPK) are enriched in basic residues.

It belongs to the universal ribosomal protein uS12 family. As to quaternary structure, part of the 30S ribosomal subunit. Contacts proteins S8 and S17. May interact with IF1 in the 30S initiation complex.

With S4 and S5 plays an important role in translational accuracy. Its function is as follows. Interacts with and stabilizes bases of the 16S rRNA that are involved in tRNA selection in the A site and with the mRNA backbone. Located at the interface of the 30S and 50S subunits, it traverses the body of the 30S subunit contacting proteins on the other side and probably holding the rRNA structure together. The combined cluster of proteins S8, S12 and S17 appears to hold together the shoulder and platform of the 30S subunit. The sequence is that of Small ribosomal subunit protein uS12 from Pseudomonas fluorescens (strain ATCC BAA-477 / NRRL B-23932 / Pf-5).